A 55-amino-acid chain; its full sequence is Large ribosomal subunit protein bL33C (55 aa).

It belongs to the bacterial ribosomal protein bL33 family.

This is Large ribosomal subunit protein bL33C from Kineococcus radiotolerans (strain ATCC BAA-149 / DSM 14245 / SRS30216).